The following is a 564-amino-acid chain: Rhodopsin kinase GRK1 (564 aa).

The interaction with RCVRN stretch occupies residues 1–15; sequence MDFGSLETVVANSAF. The tract at residues 1–189 is N-terminal; the sequence is MDFGSLETVV…LEAQPIGEDW (189 aa). The residue at position 5 (Ser5) is a Phosphoserine. Thr8 carries the phosphothreonine modification. Ser21 bears the Phosphoserine; by PKA and autocatalysis mark. Residues 58–175 form the RGS domain; that stretch reads FDNLCSEQPI…LGSLYFLRFL (118 aa). The Protein kinase domain maps to 190-455; it reads FLDFRVLGKG…CDALRANVLF (266 aa). ATP contacts are provided by residues 196–204 and Lys219; that span reads LGKGGFGEV. Residue Asp317 is the Proton acceptor of the active site. Positions 456-521 constitute an AGC-kinase C-terminal domain; the sequence is KDISWRQLEA…GNCSIPWQEE (66 aa). The tract at residues 456–564 is C-terminal; the sequence is KDISWRQLEA…TAKSGMCLIS (109 aa). Residue Ser491 is modified to Phosphoserine; by autocatalysis. Thr492 bears the Phosphothreonine; by autocatalysis mark. Cysteine methyl ester is present on Cys561. A lipid anchor (S-farnesyl cysteine) is attached at Cys561. Residues 562–564 constitute a propeptide, removed in mature form; it reads LIS.

Belongs to the protein kinase superfamily. AGC Ser/Thr protein kinase family. GPRK subfamily. In terms of assembly, interacts (via N-terminus) with RCVRN (via C-terminus); the interaction is Ca(2+)-dependent. Interacts (when prenylated) with PDE6D; this promotes release from membranes. May form a complex composed of RHO, GRK1 and RCVRN in a Ca(2+)-dependent manner; RCVRN prevents the interaction between GRK1 and RHO. In terms of processing, autophosphorylated, Ser-21 is a minor site of autophosphorylation compared to Ser-491 and Thr-492. Phosphorylation at Ser-21 is regulated by light and activated by cAMP. Farnesylation is required for full activity. Detected in retina (at protein level). Retina-specific. Expressed in rod and cone photoreceptor cells.

Its subcellular location is the membrane. It localises to the cell projection. It is found in the cilium. The protein localises to the photoreceptor outer segment. It catalyses the reaction L-threonyl-[rhodopsin] + ATP = O-phospho-L-threonyl-[rhodopsin] + ADP + H(+). The catalysed reaction is L-seryl-[rhodopsin] + ATP = O-phospho-L-seryl-[rhodopsin] + ADP + H(+). Its activity is regulated as follows. Inhibited by RCVRN, which prevents the interaction between GRK1 and RHO. Inhibition is calcium-dependent. Its function is as follows. Retina-specific kinase involved in the signal turnoff via phosphorylation of rhodopsin (RHO), the G protein- coupled receptor that initiates the phototransduction cascade. This rapid desensitization is essential for scotopic vision and permits rapid adaptation to changes in illumination. May play a role in the maintenance of the outer nuclear layer in the retina. In Rattus norvegicus (Rat), this protein is Rhodopsin kinase GRK1.